A 593-amino-acid chain; its full sequence is Chaperone protein DnaK (593 aa).

Thr-181 carries the post-translational modification Phosphothreonine; by autocatalysis.

This sequence belongs to the heat shock protein 70 family.

Its function is as follows. Acts as a chaperone. The protein is Chaperone protein DnaK of Mycoplasmoides gallisepticum (strain R(low / passage 15 / clone 2)) (Mycoplasma gallisepticum).